A 966-amino-acid polypeptide reads, in one-letter code: RNA polymerase-associated protein RapA (966 aa).

One can recognise a Helicase ATP-binding domain in the interval 163-337; that stretch reads EVGQRLHPRV…FARLKLLDAD (175 aa). 176-183 lines the ATP pocket; that stretch reads DEVGLGKT. The DEAH box signature appears at 283–286; that stretch reads DEAH. Residues 488–642 enclose the Helicase C-terminal domain; it reads RVEWLITFLK…ICPMGMALFE (155 aa).

Belongs to the SNF2/RAD54 helicase family. RapA subfamily. As to quaternary structure, interacts with the RNAP. Has a higher affinity for the core RNAP than for the holoenzyme. Its ATPase activity is stimulated by binding to RNAP.

Functionally, transcription regulator that activates transcription by stimulating RNA polymerase (RNAP) recycling in case of stress conditions such as supercoiled DNA or high salt concentrations. Probably acts by releasing the RNAP, when it is trapped or immobilized on tightly supercoiled DNA. Does not activate transcription on linear DNA. Probably not involved in DNA repair. The chain is RNA polymerase-associated protein RapA from Actinobacillus succinogenes (strain ATCC 55618 / DSM 22257 / CCUG 43843 / 130Z).